A 103-amino-acid chain; its full sequence is Large ribosomal subunit protein bL21 (103 aa).

It belongs to the bacterial ribosomal protein bL21 family. Part of the 50S ribosomal subunit. Contacts protein L20.

This protein binds to 23S rRNA in the presence of protein L20. This is Large ribosomal subunit protein bL21 from Shewanella denitrificans (strain OS217 / ATCC BAA-1090 / DSM 15013).